The sequence spans 198 residues: Probable GTP-binding protein EngB (198 aa).

Positions 36–198 constitute an EngB-type G domain; sequence SEPQFAFIGR…NLSKLQELLE (163 aa). GTP is bound by residues 44–51, 70–74, 88–91, 155–158, and 182–184; these read GRSNVGKS, GRTQL, DLPG, NKID, and ISA. Mg(2+) contacts are provided by Ser-51 and Thr-72.

The protein belongs to the TRAFAC class TrmE-Era-EngA-EngB-Septin-like GTPase superfamily. EngB GTPase family. It depends on Mg(2+) as a cofactor.

Necessary for normal cell division and for the maintenance of normal septation. The sequence is that of Probable GTP-binding protein EngB from Mesomycoplasma hyopneumoniae (strain 232) (Mycoplasma hyopneumoniae).